A 139-amino-acid chain; its full sequence is Small ribosomal subunit protein uS12 (139 aa).

The segment at 1–55 (MPTINQLIRKGRKAKVKKSDSPALNKGYNSFKKVQTDLSSPQKRGVCTRVGTMTP) is disordered. Over residues 32-42 (KKVQTDLSSPQ) the composition is skewed to polar residues.

It belongs to the universal ribosomal protein uS12 family. Part of the 30S ribosomal subunit. Contacts proteins S8 and S17. May interact with IF1 in the 30S initiation complex.

In terms of biological role, with S4 and S5 plays an important role in translational accuracy. Its function is as follows. Interacts with and stabilizes bases of the 16S rRNA that are involved in tRNA selection in the A site and with the mRNA backbone. Located at the interface of the 30S and 50S subunits, it traverses the body of the 30S subunit contacting proteins on the other side and probably holding the rRNA structure together. The combined cluster of proteins S8, S12 and S17 appears to hold together the shoulder and platform of the 30S subunit. The polypeptide is Small ribosomal subunit protein uS12 (Halalkalibacterium halodurans (strain ATCC BAA-125 / DSM 18197 / FERM 7344 / JCM 9153 / C-125) (Bacillus halodurans)).